A 504-amino-acid polypeptide reads, in one-letter code: Maturase K (504 aa).

This sequence belongs to the intron maturase 2 family. MatK subfamily.

Its subcellular location is the plastid. It is found in the chloroplast. In terms of biological role, usually encoded in the trnK tRNA gene intron. Probably assists in splicing its own and other chloroplast group II introns. This is Maturase K from Mentzelia laevicaulis (Blazing star).